A 752-amino-acid polypeptide reads, in one-letter code: Double zinc ribbon and ankyrin repeat-containing protein 1 (752 aa).

2 DZANK-type zinc fingers span residues 210 to 270 (CPKC…VVCE) and 338 to 386 (CSKC…GGCG). Over residues 448 to 469 (KKRSQQREAELSRQEQMRDRKP) the composition is skewed to basic and acidic residues. Disordered stretches follow at residues 448 to 471 (KKRS…KPLL) and 536 to 614 (PPEE…VGPE). Over residues 536–554 (PPEESRSSSAGQRSRSVTS) the composition is skewed to low complexity. The span at 555–580 (ESQNLSSVTEGRNSASPENNINTTGS) shows a compositional bias: polar residues. Residues 600 to 614 (PESKDSLLLKEVGPE) are compositionally biased toward basic and acidic residues. ANK repeat units follow at residues 638–667 (DGRP…DVNQ), 672–703 (LKNT…SIRK), and 707–737 (RGQT…GLLL).

It is found in the cytoplasm. The protein resides in the cytoskeleton. It localises to the microtubule organizing center. The protein localises to the centrosome. Its subcellular location is the cilium basal body. Its function is as follows. Required for the intracellular transport of organelles and vesicles, and is essential for the photoreceptor's outer segments formation, maintenance and function. The sequence is that of Double zinc ribbon and ankyrin repeat-containing protein 1 (dzank1) from Danio rerio (Zebrafish).